Consider the following 143-residue polypeptide: Nucleoside diphosphate kinase 2 (143 aa).

6 residues coordinate ATP: lysine 11, phenylalanine 59, arginine 87, threonine 93, arginine 104, and asparagine 114. Histidine 117 acts as the Pros-phosphohistidine intermediate in catalysis.

This sequence belongs to the NDK family. Homotetramer. It depends on Mg(2+) as a cofactor.

It localises to the cytoplasm. It catalyses the reaction a 2'-deoxyribonucleoside 5'-diphosphate + ATP = a 2'-deoxyribonucleoside 5'-triphosphate + ADP. The catalysed reaction is a ribonucleoside 5'-diphosphate + ATP = a ribonucleoside 5'-triphosphate + ADP. Its function is as follows. Major role in the synthesis of nucleoside triphosphates other than ATP. The ATP gamma phosphate is transferred to the NDP beta phosphate via a ping-pong mechanism, using a phosphorylated active-site intermediate. The chain is Nucleoside diphosphate kinase 2 from Protochlamydia amoebophila (strain UWE25).